We begin with the raw amino-acid sequence, 283 residues long: MAYSLWNDQIVEEGSITISPEDRGYQFGDGIYEVIKVYNGHMFTAQEHIDRFYASAEKIRLVIPYTKDVLHKLLHDLIEKNNLNTGHVYFQITRGTTSRNHIFPDASVPAVLTGNVKTGERSIENFEKGVKATLVEDVRWLRCDIKSLNLLGAVLAKQEASEKGCYEAILHRGDIITECSSANVYGIKDGKLYTHPANNYILNGITRQVILKCAAEINLPVIEEPMTKGDLLTMDEIIVSSVSSEVTPVIDVDGQQIGAGVPGEWTRKLQKAFEAKLPISINA.

Tyr-32 contributes to the substrate binding site. A pyridoxal 5'-phosphate-binding site is contributed by Arg-51. 2 residues coordinate substrate: Arg-99 and His-101. The Proton acceptor role is filled by Lys-146. Lys-146 is modified (N6-(pyridoxal phosphate)lysine). Glu-178 is a binding site for pyridoxal 5'-phosphate.

It belongs to the class-IV pyridoxal-phosphate-dependent aminotransferase family. In terms of assembly, homodimer. Requires pyridoxal 5'-phosphate as cofactor.

It carries out the reaction D-alanine + 2-oxoglutarate = D-glutamate + pyruvate. Functionally, acts on the D-isomers of alanine, leucine, aspartate, glutamate, aminobutyrate, norvaline and asparagine. The enzyme transfers an amino group from a substrate D-amino acid to the pyridoxal phosphate cofactor to form pyridoxamine and an alpha-keto acid in the first half-reaction. The second half-reaction is the reverse of the first, transferring the amino group from the pyridoxamine to a second alpha-keto acid to form the product D-amino acid via a ping-pong mechanism. This is an important process in the formation of D-alanine and D-glutamate, which are essential bacterial cell wall components. The polypeptide is D-alanine aminotransferase (dat) (Lysinibacillus sphaericus (Bacillus sphaericus)).